We begin with the raw amino-acid sequence, 100 residues long: Acylphosphatase (100 aa).

Positions 14 to 100 (RWRFFVEGKV…TGADWFEIRS (87 aa)) constitute an Acylphosphatase-like domain. Active-site residues include Arg-29 and Asn-47.

This sequence belongs to the acylphosphatase family.

It carries out the reaction an acyl phosphate + H2O = a carboxylate + phosphate + H(+). In Synechococcus sp. (strain WH7803), this protein is Acylphosphatase (acyP).